A 250-amino-acid chain; its full sequence is Triosephosphate isomerase (250 aa).

9 to 11 (NWK) is a binding site for substrate. H95 (electrophile) is an active-site residue. E167 serves as the catalytic Proton acceptor. Substrate-binding positions include G173, S213, and 234-235 (GG).

Belongs to the triosephosphate isomerase family. As to quaternary structure, homodimer.

It is found in the cytoplasm. The catalysed reaction is D-glyceraldehyde 3-phosphate = dihydroxyacetone phosphate. It participates in carbohydrate biosynthesis; gluconeogenesis. Its pathway is carbohydrate degradation; glycolysis; D-glyceraldehyde 3-phosphate from glycerone phosphate: step 1/1. Functionally, involved in the gluconeogenesis. Catalyzes stereospecifically the conversion of dihydroxyacetone phosphate (DHAP) to D-glyceraldehyde-3-phosphate (G3P). This Exiguobacterium sibiricum (strain DSM 17290 / CCUG 55495 / CIP 109462 / JCM 13490 / 255-15) protein is Triosephosphate isomerase.